A 168-amino-acid polypeptide reads, in one-letter code: Disulfide bond formation protein B 2 (168 aa).

Topologically, residues 1 to 9 (MSLACLRSF) are cytoplasmic. Residues 10–26 (FLPALLASTAVLVASFH) form a helical membrane-spanning segment. At 27-44 (LESVVGLVPCALCFSQRL) the chain is on the periplasmic side. Cys36 and Cys39 are disulfide-bonded. A helical membrane pass occupies residues 45-61 (MLGVYALVCLAALVHSP). Residues 62–67 (AARGRR) are Cytoplasmic-facing. Residues 68 to 85 (AYAGLALASAFGGALLAG) form a helical membrane-spanning segment. Residues 86–140 (RHVWLQGDPQVVDGCHLPVEQVLQRPLGEILQMFLLGSPDCVSISWSFLDLTLPE) lie on the Periplasmic side of the membrane. A disulfide bridge connects residues Cys100 and Cys126. A helical transmembrane segment spans residues 141 to 159 (WSLLAFLLLAAMPLSWLVA). Residues 160-168 (YRFRKRAMA) are Cytoplasmic-facing.

This sequence belongs to the DsbB family.

The protein resides in the cell inner membrane. Functionally, required for disulfide bond formation in some periplasmic proteins. Acts by oxidizing the DsbA protein. In Pseudomonas entomophila (strain L48), this protein is Disulfide bond formation protein B 2.